The primary structure comprises 325 residues: Leucine-rich repeat protein FLOR 1 (325 aa).

LRR repeat units lie at residues 65-88, 89-114, 115-140, 142-162, 163-185, 187-211, 213-233, 234-256, 257-280, and 281-305; these read NRRV…QIGD, LVDL…ITKL, KNLN…ELKS, TFLD…LSQM, PKLE…SFGS, VGNV…LSKY, FNAV…FFGR, NKTT…KVKF, ARSI…ALTK, and LHLE…LLQT.

It belongs to the polygalacturonase-inhibiting protein family. As to quaternary structure, interacts with MADS domain transcription factors during flower development. Component of a complex made of FLOR1, VSP1 and AGAMOUS (AG). Binds directly with AG. As to expression, confined to flowers and inflorescences (e.g. inflorescence meristems, floral meristems, stamens and carpels).

The protein resides in the cytoplasm. The protein localises to the nucleus. Its subcellular location is the perinuclear region. It localises to the cell membrane. Promotes flowering transition in long days (LD). This chain is Leucine-rich repeat protein FLOR 1, found in Arabidopsis thaliana (Mouse-ear cress).